Consider the following 321-residue polypeptide: Acetyl-coenzyme A carboxylase carboxyl transferase subunit alpha (321 aa).

Residues 39–293 enclose the CoA carboxyltransferase C-terminal domain; that stretch reads RLQQKSQNLA…RRALGDALRQ (255 aa).

Belongs to the AccA family. As to quaternary structure, acetyl-CoA carboxylase is a heterohexamer composed of biotin carboxyl carrier protein (AccB), biotin carboxylase (AccC) and two subunits each of ACCase subunit alpha (AccA) and ACCase subunit beta (AccD).

It localises to the cytoplasm. The enzyme catalyses N(6)-carboxybiotinyl-L-lysyl-[protein] + acetyl-CoA = N(6)-biotinyl-L-lysyl-[protein] + malonyl-CoA. The protein operates within lipid metabolism; malonyl-CoA biosynthesis; malonyl-CoA from acetyl-CoA: step 1/1. Functionally, component of the acetyl coenzyme A carboxylase (ACC) complex. First, biotin carboxylase catalyzes the carboxylation of biotin on its carrier protein (BCCP) and then the CO(2) group is transferred by the carboxyltransferase to acetyl-CoA to form malonyl-CoA. In Bordetella bronchiseptica (strain ATCC BAA-588 / NCTC 13252 / RB50) (Alcaligenes bronchisepticus), this protein is Acetyl-coenzyme A carboxylase carboxyl transferase subunit alpha.